Consider the following 68-residue polypeptide: Large ribosomal subunit protein bL32 (68 aa).

Belongs to the bacterial ribosomal protein bL32 family.

This Orientia tsutsugamushi (strain Ikeda) (Rickettsia tsutsugamushi) protein is Large ribosomal subunit protein bL32.